A 184-amino-acid chain; its full sequence is TATA-box-binding protein (184 aa).

2 tandem repeats follow at residues 9-85 (IENI…IDKL) and 100-178 (VQNI…KKDL).

Belongs to the TBP family.

In terms of biological role, general factor that plays a role in the activation of archaeal genes transcribed by RNA polymerase. Binds specifically to the TATA box promoter element which lies close to the position of transcription initiation. The polypeptide is TATA-box-binding protein (Picrophilus torridus (strain ATCC 700027 / DSM 9790 / JCM 10055 / NBRC 100828 / KAW 2/3)).